A 436-amino-acid chain; its full sequence is GTPase Der (436 aa).

EngA-type G domains lie at 4–167 and 176–351; these read PVVA…PKEE and VKFS…DNHS. GTP is bound by residues 10–17, 57–61, 119–122, 182–189, 229–233, and 294–297; these read GRPNVGKS, DTGGI, NKVD, DTAGM, and NKWD. The 85-residue stretch at 352–436 folds into the KH-like domain; it reads LRVQSSMLND…PIRVIARKRK (85 aa).

This sequence belongs to the TRAFAC class TrmE-Era-EngA-EngB-Septin-like GTPase superfamily. EngA (Der) GTPase family. In terms of assembly, associates with the 50S ribosomal subunit.

Functionally, GTPase that plays an essential role in the late steps of ribosome biogenesis. In Listeria innocua serovar 6a (strain ATCC BAA-680 / CLIP 11262), this protein is GTPase Der.